The sequence spans 673 residues: Cell division cycle protein 23 homolog (673 aa).

10 TPR repeats span residues Ala86 to Asn120, Asn159 to His195, Glu232 to Ile267, Pro332 to Arg365, Trp400 to Leu433, Ala434 to Asp467, Arg469 to Asp501, Ser502 to Glu535, Leu539 to Ala572, and Ile577 to Cys610. The tract at residues Ser628–Phe673 is disordered. Low complexity predominate over residues Ala635–Gly646. Over residues Met650–Phe673 the composition is skewed to acidic residues.

It belongs to the APC8/CDC23 family. The APC/C complex is probably composed of at least 12 subunits: apc-2, apc-10, apc-11, cdc-26, emb-1, emb-27, emb-30, mat-1, mat-2, mat-3, such-1 and gfi-3.

The protein operates within protein modification; protein ubiquitination. In terms of biological role, probable component of the anaphase promoting complex/cyclosome (APC/C), a cell cycle-regulated E3 ubiquitin ligase that controls progression through mitosis and the G1 phase of the cell cycle. The APC/C complex acts by mediating ubiquitination and subsequent degradation of target proteins. Developmental role in early embryogenesis and the metaphase to anaphase transition in oocyte and spermatocyte meiosis and mitosis in germ cells. Required for embryonic anterior-posterior axis formation. Plays a role in regulating the abundance of glr-1 receptors in postmitotic neurons, which may in turn control animal locomotion. Involved in regulating GABA neurotransmitter release at neuromuscular junctions in GABA motor neurons. This chain is Cell division cycle protein 23 homolog, found in Caenorhabditis elegans.